A 268-amino-acid chain; its full sequence is MVLTRRIIPCLDLKDGRVVKGTNFLGLRDAGDPVELAGRYNEQGADEVVFLDITASKEKRGIIIELIQRAADQLFLPLTVGGGLRTLDDIQQILRAGADKVSLNTSAVHDPSIITKGAESFGTQCIVVAMDVRRNFTLNPEAVPVRLCDGTTCWYEVVIYGGSKPTGIDAVRWAKEAEERGAGEILLTSMETDGTKNGFDIAVTRAISEAANIPVIASGGVGTLEHFYEGFTRGKADACLAASVFHYGEMSVRDVKEYLKGKGIPVRL.

Catalysis depends on residues Asp-12 and Asp-131.

The protein belongs to the HisA/HisF family. In terms of assembly, heterodimer of HisH and HisF.

It localises to the cytoplasm. It catalyses the reaction 5-[(5-phospho-1-deoxy-D-ribulos-1-ylimino)methylamino]-1-(5-phospho-beta-D-ribosyl)imidazole-4-carboxamide + L-glutamine = D-erythro-1-(imidazol-4-yl)glycerol 3-phosphate + 5-amino-1-(5-phospho-beta-D-ribosyl)imidazole-4-carboxamide + L-glutamate + H(+). It participates in amino-acid biosynthesis; L-histidine biosynthesis; L-histidine from 5-phospho-alpha-D-ribose 1-diphosphate: step 5/9. Functionally, IGPS catalyzes the conversion of PRFAR and glutamine to IGP, AICAR and glutamate. The HisF subunit catalyzes the cyclization activity that produces IGP and AICAR from PRFAR using the ammonia provided by the HisH subunit. This chain is Imidazole glycerol phosphate synthase subunit HisF, found in Methanoregula boonei (strain DSM 21154 / JCM 14090 / 6A8).